The primary structure comprises 178 residues: N-alpha-acetyltransferase 20 (178 aa).

Residues 2–157 enclose the N-acetyltransferase domain; the sequence is TSLRPFTCDD…DAYDMRKALS (156 aa). Residues 159-178 form a disordered region; sequence DTEKKSIVPLPHPVRPEDIE.

The protein belongs to the acetyltransferase family. ARD1 subfamily. Component of the N-terminal acetyltransferase B (NatB) complex which is composed of naa20 and naa25.

It is found in the cytoplasm. The protein resides in the nucleus. It catalyses the reaction N-terminal L-methionyl-L-asparaginyl-[protein] + acetyl-CoA = N-terminal N(alpha)-acetyl-L-methionyl-L-asparaginyl-[protein] + CoA + H(+). The enzyme catalyses N-terminal L-methionyl-L-glutaminyl-[protein] + acetyl-CoA = N-terminal N(alpha)-acetyl-L-methionyl-L-glutaminyl-[protein] + CoA + H(+). The catalysed reaction is N-terminal L-methionyl-L-aspartyl-[protein] + acetyl-CoA = N-terminal N(alpha)-acetyl-L-methionyl-L-aspartyl-[protein] + CoA + H(+). It carries out the reaction N-terminal L-methionyl-L-glutamyl-[protein] + acetyl-CoA = N-terminal N(alpha)-acetyl-L-methionyl-L-glutamyl-[protein] + CoA + H(+). Its function is as follows. Catalytic subunit of the NatB complex which catalyzes acetylation of the N-terminal methionine residues of peptides beginning with Met-Asp, Met-Glu, Met-Asn and Met-Gln. Proteins with cell cycle functions are overrepresented in the pool of NatB substrates. Required for maintaining the structure and function of actomyosin fibers and for proper cellular migration. The protein is N-alpha-acetyltransferase 20 (naa20) of Xenopus tropicalis (Western clawed frog).